We begin with the raw amino-acid sequence, 721 residues long: MKIYAVREPVFSGPTPSFQNVSNDIPLVIDNGSWQLRAGWGGEKDPKLVFDNLVSRYRDRKLSRTSTLVGNDTLIEVGSRSIARSPFERNVISNWDLMEQVLDYTFLKLGIDRMEHPICMTEPLANPTYVRSTMTELLFELYNAPSVAYGIDGLFSFYHNTKPSSSGIVLNLGNAASHVIPVLNGERILSEAKRISWGGSQSSSYLLKLFQIKYPSFPIKMLPSQAELLMHDHCHVSSDYTHDIAHALDRDILERDEIVLQFPYTEAAAQEKSQEELELIAERKRESGRRLQAQAAIKRKEKAAERDRELATLTELQQQSLVLSRRAFQRALEEAGFEDESQLNAQVKNVQAKIRRAQRDQQRQEESEGSLDVTEIDVEQAFPLLNVPDAELDEAGLRQKRHQRLMKANYDARVRAKAEKAIEEAAEAERAEADERLRLENFSTWVNEKRETHKILLEKISKNKRLKFELNDRKSHASQMRMKSLATLASEQPIQKRKRKDQSEDNFGARDEDWKVYHDVLTAEQLEEERKKLLDQIYSLEKQLLEYDSQFTQANTYDTLNDPRATLLYAFTRGVSDFDVNDVAQAFQLHLNVEQIRVPEVIFSPSIVGIDQAGILEIMRSILQRHSLEEQQKLVSNVLITGGLGSLPGMETRIKRELTSIMPVGSSINVFRASNPLLDAWKGASEWSVTEKFKAAKVTREEYLEKGPEYIKEHSLGNINS.

Residues 266–368 (EAAAQEKSQE…RDQQRQEESE (103 aa)) adopt a coiled-coil conformation. The segment at 486-507 (ATLASEQPIQKRKRKDQSEDNF) is disordered.

Belongs to the actin family. As to quaternary structure, component of the INO80 chromatin remodeling complex.

Its subcellular location is the nucleus. Its function is as follows. Component of the INO80 complex which remodels chromatin by shifting nucleosomes and is involved in DNA repair. This chain is Actin-like protein arp5 (arp5), found in Schizosaccharomyces pombe (strain 972 / ATCC 24843) (Fission yeast).